Consider the following 132-residue polypeptide: Small ribosomal subunit protein uS8 (132 aa).

The protein belongs to the universal ribosomal protein uS8 family. In terms of assembly, part of the 30S ribosomal subunit. Contacts proteins S5 and S12.

Its function is as follows. One of the primary rRNA binding proteins, it binds directly to 16S rRNA central domain where it helps coordinate assembly of the platform of the 30S subunit. The protein is Small ribosomal subunit protein uS8 of Anoxybacillus flavithermus (strain DSM 21510 / WK1).